Here is a 1011-residue protein sequence, read N- to C-terminus: Phosphoenolpyruvate carboxylase (1011 aa).

Catalysis depends on residues His-207 and Lys-658.

It belongs to the PEPCase type 1 family. Mg(2+) serves as cofactor.

The enzyme catalyses oxaloacetate + phosphate = phosphoenolpyruvate + hydrogencarbonate. Forms oxaloacetate, a four-carbon dicarboxylic acid source for the tricarboxylic acid cycle. This chain is Phosphoenolpyruvate carboxylase (ppc), found in Thermosynechococcus vestitus (strain NIES-2133 / IAM M-273 / BP-1).